A 239-amino-acid chain; its full sequence is uncharacterized protein (239 aa).

The disordered stretch occupies residues 193–214; it reads RKRKLNLSDGENKAKSPYSSIS.

The protein localises to the nucleus. This is an uncharacterized protein from Schizosaccharomyces pombe (strain 972 / ATCC 24843) (Fission yeast).